The sequence spans 289 residues: Diaminopimelate epimerase (289 aa).

The substrate site is built by Asn-17, Gln-47, and Asn-67. Cys-76 acts as the Proton donor in catalysis. Substrate is bound by residues 77–78 (GN), Asn-164, Asn-198, and 216–217 (ER). The active-site Proton acceptor is the Cys-225. 226–227 (GS) is a substrate binding site.

The protein belongs to the diaminopimelate epimerase family. Homodimer.

It localises to the cytoplasm. It catalyses the reaction (2S,6S)-2,6-diaminopimelate = meso-2,6-diaminopimelate. It functions in the pathway amino-acid biosynthesis; L-lysine biosynthesis via DAP pathway; DL-2,6-diaminopimelate from LL-2,6-diaminopimelate: step 1/1. In terms of biological role, catalyzes the stereoinversion of LL-2,6-diaminopimelate (L,L-DAP) to meso-diaminopimelate (meso-DAP), a precursor of L-lysine and an essential component of the bacterial peptidoglycan. The protein is Diaminopimelate epimerase of Bradyrhizobium sp. (strain BTAi1 / ATCC BAA-1182).